The primary structure comprises 240 residues: UDP-2,3-diacylglucosamine hydrolase (240 aa).

Mn(2+)-binding residues include aspartate 8, histidine 10, aspartate 41, asparagine 78, and histidine 113. Substrate is bound at residue 78 to 79 (NR). Positions 121, 159, 163, 166, and 194 each coordinate substrate. Mn(2+) contacts are provided by histidine 194 and histidine 196.

This sequence belongs to the LpxH family. Mn(2+) is required as a cofactor.

It is found in the cell inner membrane. The catalysed reaction is UDP-2-N,3-O-bis[(3R)-3-hydroxytetradecanoyl]-alpha-D-glucosamine + H2O = 2-N,3-O-bis[(3R)-3-hydroxytetradecanoyl]-alpha-D-glucosaminyl 1-phosphate + UMP + 2 H(+). It participates in glycolipid biosynthesis; lipid IV(A) biosynthesis; lipid IV(A) from (3R)-3-hydroxytetradecanoyl-[acyl-carrier-protein] and UDP-N-acetyl-alpha-D-glucosamine: step 4/6. Functionally, hydrolyzes the pyrophosphate bond of UDP-2,3-diacylglucosamine to yield 2,3-diacylglucosamine 1-phosphate (lipid X) and UMP by catalyzing the attack of water at the alpha-P atom. Involved in the biosynthesis of lipid A, a phosphorylated glycolipid that anchors the lipopolysaccharide to the outer membrane of the cell. The sequence is that of UDP-2,3-diacylglucosamine hydrolase from Shewanella baltica (strain OS155 / ATCC BAA-1091).